Here is an 821-residue protein sequence, read N- to C-terminus: MRVSLRWLRELVAVDLDVTMLADRLTMAGFEVEDIEDRRTWAEGVVVGYILACEPHPNAQKLRVCQVDVGQGEPRTIVCGAPNAAAGLYVPVALPGAYLAKIDLKIRPAKLRGVKSEGMICSLAELGLTKESEGIHTFTDAVTVGEDVRPLLGLDDVILHLTSTANRADALSMVGIAREVAALTGAPLTLPTPRAIAPKKSGAKGPVQLAIADPQACPAYCGTLITHVQIAPSPLWLQQRLEAAGLRAINNVVDITNYILLKWGQPLHAFDWDRLQKVAAQTPVSVGVRFAKAGETLKTLDGQERRLSSENLLITAGDVPVALAGVMGGEETEVHPGTQNVFLEAALFASPVIRRSARAQGLRTEASARYERGVNPAELEAATAEAIALLKEIAQGTVSDTTLADQRPPLERTLTLRLEQVHRLLGAVVSEAEDSDEPAYLDPETVEELLSRLGFHLSRQETLEDELVVWSVTVPPYRFRDIEREVDLIEEIARLYGYDRFEETLPAQTEVGALPLELTLLREVRAAFRGAGLTELMHYSWVKGGQPNQVTVVNPLVAEFSSLRTDLITGLVQAFRYNHEQGNPPLNGFEIGRVFGQDEEGLWENDRLGGIIGGDPWQGKWVRRSQQPQPLTWYEAKGILESVFQRFGLNVEYQSDRHDERLHPGRTAVLCLQGERLGIFGQLHPQYAATLEIPAAIYVFELDLEVLLSRLEERYRQIVFQPFSTYPASDRDLAFFAPTALTVAELSRTIWKAAGGRDSFLESVELFDEYSGSGVPAGQRSLAFRLTYRASDRTLTEAEVNELHQRIRDSLVEKYAVTLRS.

The region spanning 39 to 149 is the tRNA-binding domain; the sequence is RTWAEGVVVG…DAVTVGEDVR (111 aa). Residues 409–503 form the B5 domain; sequence PLERTLTLRL…RLYGYDRFEE (95 aa). Residues Asp481, Asp487, Glu490, and Glu491 each coordinate Mg(2+). The 97-residue stretch at 724–820 folds into the FDX-ACB domain; it reads STYPASDRDL…LVEKYAVTLR (97 aa).

The protein belongs to the phenylalanyl-tRNA synthetase beta subunit family. Type 1 subfamily. Tetramer of two alpha and two beta subunits. Mg(2+) is required as a cofactor.

The protein resides in the cytoplasm. It catalyses the reaction tRNA(Phe) + L-phenylalanine + ATP = L-phenylalanyl-tRNA(Phe) + AMP + diphosphate + H(+). This is Phenylalanine--tRNA ligase beta subunit from Thermosynechococcus vestitus (strain NIES-2133 / IAM M-273 / BP-1).